We begin with the raw amino-acid sequence, 367 residues long: Uroporphyrinogen decarboxylase (367 aa).

Met-1 carries the post-translational modification N-acetylmethionine. Coproporphyrinogen I-binding residues include Arg-37, Ala-39, Arg-41, Arg-50, Asp-86, Tyr-164, Ser-219, and His-339. Residues Arg-37, Ala-39, and Arg-41 each contribute to the coproporphyrinogen III site. Coproporphyrinogen III contacts are provided by Asp-86, Tyr-164, Ser-219, and His-339.

The protein belongs to the uroporphyrinogen decarboxylase family. Homodimer.

It is found in the cytoplasm. The protein localises to the cytosol. It catalyses the reaction uroporphyrinogen III + 4 H(+) = coproporphyrinogen III + 4 CO2. The enzyme catalyses uroporphyrinogen I + 4 H(+) = coproporphyrinogen I + 4 CO2. It participates in porphyrin-containing compound metabolism; protoporphyrin-IX biosynthesis; coproporphyrinogen-III from 5-aminolevulinate: step 4/4. Functionally, catalyzes the sequential decarboxylation of the four acetate side chains of uroporphyrinogen to form coproporphyrinogen and participates in the fifth step in the heme biosynthetic pathway. Isomer I or isomer III of uroporphyrinogen may serve as substrate, but only coproporphyrinogen III can ultimately be converted to heme. In vitro also decarboxylates pentacarboxylate porphyrinogen I. The protein is Uroporphyrinogen decarboxylase of Mus musculus (Mouse).